Consider the following 95-residue polypeptide: Putative RelE-like toxin protein (95 aa).

Belongs to the RelE toxin family.

Toxic component of a type II toxin-antitoxin (TA) system. The chain is Putative RelE-like toxin protein from Escherichia coli.